Here is a 468-residue protein sequence, read N- to C-terminus: MFPRQILVFAALGLCFALVAGATQVSGVRRWELRRRFSFEDSFYHPPSGWESASPGEVLASRKVDVSPASIFNLGINAYQLLYRTTGLTDGEATTSVTTVLVPYNYDKDKVMVSALYEDSFSSECAPSKQLKSGHFISQNVAVAYQSLFLTTLLHEGWVVTVPDHEGPQNAFGAGPLEGHAILDAVRATINYDRIGLGSNAKVTGYGYSGGAMALGWAASLHKSYASELNVVGWAMGGTVTRMADWLRYIDGTGGAGFAVAALGGISSVDNDLQWVQDNLTPLGKIVLEKSKHSCMYKNLLEEAYKRFISDTYFQGGSTFFENSGAMYALNKYNLGEDGSKVPSAPVFMFHARNDIVVPYAMAQATARSWCQQGAQIRFTTYAGVEMGHTSAGIASLPDVLHFLRDRFNGKQWGETCQYPVVLDPWFNLFNLGESYAEFVQQLLDLLGRRIGKDDHILMAKLKKQEVP.

The N-terminal stretch at 1-21 is a signal peptide; it reads MFPRQILVFAALGLCFALVAG. An intrachain disulfide couples C125 to C295. The active-site Nucleophile is S209. Active-site residues include D355 and H389.

Belongs to the AB hydrolase superfamily. Lipase family. Class Lip subfamily.

It is found in the secreted. The protein resides in the cell wall. It catalyses the reaction a triacylglycerol + H2O = a diacylglycerol + a fatty acid + H(+). The catalysed reaction is a monoacylglycerol + H2O = glycerol + a fatty acid + H(+). It carries out the reaction a diacylglycerol + H2O = a monoacylglycerol + a fatty acid + H(+). Secreted lipase involved in Dandruff and seborrheic dermatitis (D/SD) probably via lipase-mediated breakdown of sebaceous lipids and release of irritating free fatty acids. Has triacylglycerol lipase activity and is able to hydrolyze triolein. Mostly converts monoolein to di- and triolein, while free fatty acids are only produced in low amounts. The sequence is that of Secreted triacylglycerol lipase LIP7 from Malassezia globosa (strain ATCC MYA-4612 / CBS 7966) (Dandruff-associated fungus).